Consider the following 102-residue polypeptide: Cytochrome c3 (102 aa).

Positions 26, 29, 34, 37, 38, 39, 50, 55, 56, 73, 81, 84, 85, 95, 98, and 99 each coordinate heme c.

Heme is required as a cofactor.

The protein resides in the periplasm. In terms of biological role, participates in sulfate respiration coupled with phosphorylation by transferring electrons from the enzyme dehydrogenase to ferredoxin. The sequence is that of Cytochrome c3 from Desulfovibrio desulfuricans.